The following is a 246-amino-acid chain: MAMIGVMEDSKLHEDMENDMLGDLTSRAREALALFISISLRDNTELNLVVPNGPSWLSHVDKKDLYLNDETLKKITDILVAKDVTGNYNIVNVAIAAAPQHSQKRFVIYIKTSIYVEIVVIGNMKSNLTLIADGQDSTIITFNLSSSNSKRTFNTATFASNGDGFIRVDMCFRNTTWPVKGPVVTLRVNGDMSIIYRCRVEEYQDALYPHKNRQCYREYFLMDTVDFICGNAAAVFQFCQIVHMDG.

N-linked (GlcNAc...) asparagine glycosylation is found at Asn-127 and Asn-143. Position 152 (Thr-152) interacts with substrate. N-linked (GlcNAc...) asparagine glycosylation occurs at Asn-174. Asp-205 (proton donor) is an active-site residue. The active-site Nucleophile is the Asp-226.

This sequence belongs to the pectinesterase family.

It catalyses the reaction [(1-&gt;4)-alpha-D-galacturonosyl methyl ester](n) + n H2O = [(1-&gt;4)-alpha-D-galacturonosyl](n) + n methanol + n H(+). Its pathway is glycan metabolism; pectin degradation; 2-dehydro-3-deoxy-D-gluconate from pectin: step 1/5. In terms of biological role, acts in the modification of cell walls via demethylesterification of cell wall pectin. The polypeptide is Putative pectinesterase 57 (PME57) (Arabidopsis thaliana (Mouse-ear cress)).